The chain runs to 127 residues: UPF0102 protein Reut_A3265 (127 aa).

The protein belongs to the UPF0102 family.

This is UPF0102 protein Reut_A3265 from Cupriavidus pinatubonensis (strain JMP 134 / LMG 1197) (Cupriavidus necator (strain JMP 134)).